The chain runs to 369 residues: Saccharopine dehydrogenase [NAD(+), L-lysine-forming] (369 aa).

Residues Arg19 and Lys78 each contribute to the L-saccharopine site. The Proton acceptor role is filled by Lys78. His96 serves as the catalytic Proton donor. Residue Gln101 coordinates L-saccharopine. An NAD(+)-binding site is contributed by Arg130. The L-saccharopine site is built by Arg131 and Phe135. NAD(+)-binding positions include 203–204, Asp227, Thr231, Tyr251, and Val278; that span reads GR. A disulfide bridge links Cys205 with Cys249. 279 to 281 serves as a coordination point for L-saccharopine; it reads SAD. 318–321 lines the NAD(+) pocket; the sequence is IDHL.

This sequence belongs to the AlaDH/PNT family. In terms of assembly, monomer.

The catalysed reaction is L-saccharopine + NAD(+) + H2O = L-lysine + 2-oxoglutarate + NADH + H(+). Its pathway is amino-acid biosynthesis; L-lysine biosynthesis via AAA pathway; L-lysine from L-alpha-aminoadipate (fungal route): step 3/3. Functionally, catalyzes the NAD(+)-dependent cleavage of saccharopine to L-lysine and 2-oxoglutarate, the final step in the alpha-aminoadipate (AAA) pathway for lysin biosynthesis. This is Saccharopine dehydrogenase [NAD(+), L-lysine-forming] from Yarrowia lipolytica (strain CLIB 122 / E 150) (Yeast).